The primary structure comprises 377 residues: Nitric oxide reductase FlRd-NAD(+) reductase (377 aa).

This sequence belongs to the FAD-dependent oxidoreductase family. It depends on FAD as a cofactor.

It localises to the cytoplasm. The catalysed reaction is 2 reduced [nitric oxide reductase rubredoxin domain] + NAD(+) + H(+) = 2 oxidized [nitric oxide reductase rubredoxin domain] + NADH. Its pathway is nitrogen metabolism; nitric oxide reduction. Its function is as follows. One of at least two accessory proteins for anaerobic nitric oxide (NO) reductase. Reduces the rubredoxin moiety of NO reductase. The sequence is that of Nitric oxide reductase FlRd-NAD(+) reductase from Salmonella paratyphi B (strain ATCC BAA-1250 / SPB7).